Consider the following 71-residue polypeptide: Small ribosomal subunit protein bS21 (71 aa).

It belongs to the bacterial ribosomal protein bS21 family.

This is Small ribosomal subunit protein bS21 from Chromohalobacter salexigens (strain ATCC BAA-138 / DSM 3043 / CIP 106854 / NCIMB 13768 / 1H11).